Here is a 234-residue protein sequence, read N- to C-terminus: Small ribosomal subunit protein uS2 (234 aa).

The protein belongs to the universal ribosomal protein uS2 family.

This chain is Small ribosomal subunit protein uS2, found in Prochlorococcus marinus subsp. pastoris (strain CCMP1986 / NIES-2087 / MED4).